The chain runs to 101 residues: Urease subunit beta (101 aa).

The protein belongs to the urease beta subunit family. As to quaternary structure, heterotrimer of UreA (gamma), UreB (beta) and UreC (alpha) subunits. Three heterotrimers associate to form the active enzyme.

The protein resides in the cytoplasm. The enzyme catalyses urea + 2 H2O + H(+) = hydrogencarbonate + 2 NH4(+). It functions in the pathway nitrogen metabolism; urea degradation; CO(2) and NH(3) from urea (urease route): step 1/1. The polypeptide is Urease subunit beta (Verminephrobacter eiseniae (strain EF01-2)).